The primary structure comprises 285 residues: G patch domain-containing protein 11 (285 aa).

Positions 51–87 form a coiled coil; it reads MLRQIREARRKEEKQQEANLKNRQKSLKEEEQERRDI. Positions 59–84 are disordered; the sequence is RRKEEKQQEANLKNRQKSLKEEEQER. The G-patch domain maps to 95-141; the sequence is CENKGFALLQKMGYKSGQALGKSGGGIVEPIPLNIKTGKSGIGHEAS. Ser141 is subject to Phosphoserine. Lys149 carries the N6-acetyllysine modification. The span at 218 to 235 shows a compositional bias: acidic residues; that stretch reads EETEEDEEEKEQDEDEYK. The interval 218–237 is disordered; the sequence is EETEEDEEEKEQDEDEYKSE.

The protein belongs to the GPATCH11 family.

It localises to the chromosome. The protein localises to the centromere. It is found in the kinetochore. In Homo sapiens (Human), this protein is G patch domain-containing protein 11 (GPATCH11).